The following is a 70-amino-acid chain: Exodeoxyribonuclease 7 small subunit (70 aa).

This sequence belongs to the XseB family. In terms of assembly, heterooligomer composed of large and small subunits.

It localises to the cytoplasm. It catalyses the reaction Exonucleolytic cleavage in either 5'- to 3'- or 3'- to 5'-direction to yield nucleoside 5'-phosphates.. Its function is as follows. Bidirectionally degrades single-stranded DNA into large acid-insoluble oligonucleotides, which are then degraded further into small acid-soluble oligonucleotides. The sequence is that of Exodeoxyribonuclease 7 small subunit from Streptococcus sanguinis (strain SK36).